The primary structure comprises 107 residues: Phosphoribosyl-ATP pyrophosphatase (107 aa).

It belongs to the PRA-PH family.

The protein resides in the cytoplasm. The catalysed reaction is 1-(5-phospho-beta-D-ribosyl)-ATP + H2O = 1-(5-phospho-beta-D-ribosyl)-5'-AMP + diphosphate + H(+). It functions in the pathway amino-acid biosynthesis; L-histidine biosynthesis; L-histidine from 5-phospho-alpha-D-ribose 1-diphosphate: step 2/9. The chain is Phosphoribosyl-ATP pyrophosphatase from Rhizobium etli (strain CIAT 652).